A 138-amino-acid polypeptide reads, in one-letter code: Hydrogenase maturation factor HypA (138 aa).

His-2 serves as a coordination point for Ni(2+). Zn(2+) is bound by residues Cys-73, Cys-76, Cys-110, and Cys-113.

It belongs to the HypA/HybF family.

In terms of biological role, involved in the maturation of [NiFe] hydrogenases. Required for nickel insertion into the metal center of the hydrogenase. This chain is Hydrogenase maturation factor HypA, found in Thermococcus sibiricus (strain DSM 12597 / MM 739).